The following is a 734-amino-acid chain: Photosystem I P700 chlorophyll a apoprotein A2 (734 aa).

8 consecutive transmembrane segments (helical) span residues 46–69 (IFAS…FHVA), 135–158 (LYTG…LHLQ), 175–199 (LNHH…HVAI), 273–291 (IAHH…GHMY), 330–353 (IHFQ…QHMY), 369–395 (AALY…IFFI), 417–439 (AIKS…LYVH), and 517–535 (FLVH…LILV). [4Fe-4S] cluster is bound by residues Cys559 and Cys568. Helical transmembrane passes span 575-596 (AFYL…YWHW) and 643-665 (LSVW…MFLI). 3 residues coordinate chlorophyll a: His654, Met662, and Tyr670. Trp671 is a binding site for phylloquinone. A helical membrane pass occupies residues 707-727 (LVGLAHFSVGYIFTYAAFLIA).

It belongs to the PsaA/PsaB family. As to quaternary structure, the PsaA/B heterodimer binds the P700 chlorophyll special pair and subsequent electron acceptors. PSI consists of a core antenna complex that captures photons, and an electron transfer chain that converts photonic excitation into a charge separation. The eukaryotic PSI reaction center is composed of at least 11 subunits. The cofactor is P700 is a chlorophyll a/chlorophyll a' dimer, A0 is one or more chlorophyll a, A1 is one or both phylloquinones and FX is a shared 4Fe-4S iron-sulfur center..

The protein resides in the plastid. The protein localises to the chloroplast thylakoid membrane. It catalyses the reaction reduced [plastocyanin] + hnu + oxidized [2Fe-2S]-[ferredoxin] = oxidized [plastocyanin] + reduced [2Fe-2S]-[ferredoxin]. In terms of biological role, psaA and PsaB bind P700, the primary electron donor of photosystem I (PSI), as well as the electron acceptors A0, A1 and FX. PSI is a plastocyanin-ferredoxin oxidoreductase, converting photonic excitation into a charge separation, which transfers an electron from the donor P700 chlorophyll pair to the spectroscopically characterized acceptors A0, A1, FX, FA and FB in turn. Oxidized P700 is reduced on the lumenal side of the thylakoid membrane by plastocyanin. In Liriodendron tulipifera (Tuliptree), this protein is Photosystem I P700 chlorophyll a apoprotein A2.